The primary structure comprises 345 residues: GTPase Obg (345 aa).

Residues 1 to 159 (MRFIDEASIT…FHLKLELKLL (159 aa)) enclose the Obg domain. In terms of domain architecture, OBG-type G spans 160-329 (ADVGIVGLPN…LIQILARQIA (170 aa)). GTP is bound by residues 166-173 (GLPNAGKS), 191-195 (FTTLT), 213-216 (DIPG), 283-286 (NKID), and 310-312 (SAA). Mg(2+) is bound by residues S173 and T193.

Belongs to the TRAFAC class OBG-HflX-like GTPase superfamily. OBG GTPase family. In terms of assembly, monomer. The cofactor is Mg(2+).

It localises to the cytoplasm. Its function is as follows. An essential GTPase which binds GTP, GDP and possibly (p)ppGpp with moderate affinity, with high nucleotide exchange rates and a fairly low GTP hydrolysis rate. Plays a role in control of the cell cycle, stress response, ribosome biogenesis and in those bacteria that undergo differentiation, in morphogenesis control. The polypeptide is GTPase Obg (Desulforapulum autotrophicum (strain ATCC 43914 / DSM 3382 / VKM B-1955 / HRM2) (Desulfobacterium autotrophicum)).